We begin with the raw amino-acid sequence, 32 residues long: MSDIN-like toxin proprotein a (32 aa).

Residues 1 to 10 (MSDINATRLP) constitute a propeptide that is removed on maturation. Positions 11–18 (IIGILLPP) form a cross-link, cyclopeptide (Ile-Pro). Positions 19–32 (CIGDDVTLLLTRGE) are excised as a propeptide.

It belongs to the MSDIN fungal toxin family. Post-translationally, processed by the macrocyclase-peptidase enzyme POPB to yield a toxic cyclic octapeptide. POPB first removes 10 residues from the N-terminus. Conformational trapping of the remaining peptide forces the enzyme to release this intermediate rather than proceed to macrocyclization. The enzyme rebinds the remaining peptide in a different conformation and catalyzes macrocyclization of the N-terminal 8 residues.

Its function is as follows. Probable toxin that belongs to the MSDIN-like toxin family responsible for a large number of food poisoning cases and deaths. In Amanita phalloides (Death cap), this protein is MSDIN-like toxin proprotein a.